A 567-amino-acid chain; its full sequence is Sensor histidine kinase MtrB (567 aa).

Residues 1–15 (MIFGSRRRIRGRRGR) show a composition bias toward basic residues. Residues 1-20 (MIFGSRRRIRGRRGRSGPMT) form a disordered region. A run of 2 helical transmembrane segments spans residues 42–62 (VVALTLGLSLAVILALGFVLT) and 213–233 (GTMATGGLVLLVLLAGIALLV). The region spanning 235 to 287 (RQVVVPVRSASRIAERFAEGHLSERMPVRGEDDMARLAVSFNDMAESLSRQIA) is the HAMP domain. In terms of domain architecture, Histidine kinase spans 302 to 519 (DVSHELRTPL…CFRLTLPLVR (218 aa)). His305 bears the Phosphohistidine; by autocatalysis mark. Positions 526-567 (SPLPMKPIPQPVLQPVAQPNPQPMPPEYKERQRPREHAEWSG) are disordered. A compositionally biased stretch (pro residues) spans 529-551 (PMKPIPQPVLQPVAQPNPQPMPP). A compositionally biased stretch (basic and acidic residues) spans 552–567 (EYKERQRPREHAEWSG).

It localises to the cell membrane. The catalysed reaction is ATP + protein L-histidine = ADP + protein N-phospho-L-histidine.. Functionally, member of the two-component regulatory system MtrA/MtrB. Seems to function as a membrane-associated protein kinase that phosphorylates MtrA in response to environmental signals. The sequence is that of Sensor histidine kinase MtrB (mtrB) from Mycobacterium bovis (strain ATCC BAA-935 / AF2122/97).